The chain runs to 1360 residues: DNA-directed RNA polymerase subunit beta (1360 aa).

The protein belongs to the RNA polymerase beta chain family. In terms of assembly, the RNAP catalytic core consists of 2 alpha, 1 beta, 1 beta' and 1 omega subunit. When a sigma factor is associated with the core the holoenzyme is formed, which can initiate transcription.

The enzyme catalyses RNA(n) + a ribonucleoside 5'-triphosphate = RNA(n+1) + diphosphate. Its function is as follows. DNA-dependent RNA polymerase catalyzes the transcription of DNA into RNA using the four ribonucleoside triphosphates as substrates. This Desulfotalea psychrophila (strain LSv54 / DSM 12343) protein is DNA-directed RNA polymerase subunit beta.